A 263-amino-acid chain; its full sequence is MKKELLKILREKKPLVHHITNVVTVNDCANITLAIGALPVMAHALEEVEEMVSAADALVLNIGTLTNEQVEAMIKAGKAANRFKVPVILDPVGAGATKLRTQSSKKILEEVKISVIKGNSAEISILAGKGGKIRGVESQGGVDDIAEAAKDLANAYNVVVAMSGATDIITDGKRIAYVKNGHPMMGTITGTGCMLTSVVASFCGVCEDYFETTIEAFVAFGIAGERAAQSSNVKGPGSFKVTFFDEIYNLTPEIIEKDKKVEV.

M41 is a binding site for substrate. Positions 117 and 163 each coordinate ATP. Residue G190 coordinates substrate.

This sequence belongs to the Thz kinase family. Requires Mg(2+) as cofactor.

The catalysed reaction is 5-(2-hydroxyethyl)-4-methylthiazole + ATP = 4-methyl-5-(2-phosphooxyethyl)-thiazole + ADP + H(+). It participates in cofactor biosynthesis; thiamine diphosphate biosynthesis; 4-methyl-5-(2-phosphoethyl)-thiazole from 5-(2-hydroxyethyl)-4-methylthiazole: step 1/1. In terms of biological role, catalyzes the phosphorylation of the hydroxyl group of 4-methyl-5-beta-hydroxyethylthiazole (THZ). In Thermoanaerobacter sp. (strain X514), this protein is Hydroxyethylthiazole kinase.